A 219-amino-acid chain; its full sequence is Poxin (219 aa).

His-17 serves as the catalytic Proton donor. The active-site Shared with catalytic histidine of dimeric partner is Tyr-138. Lys-142 acts as the Proton acceptor; shared with catalytic histidine of dimeric partner in catalysis.

The protein belongs to the poxin family. In terms of assembly, homodimer.

The enzyme catalyses 2',3'-cGAMP + H2O = Gp(2'-5')Ap(3') + H(+). Its function is as follows. Nuclease that is responsible for viral evasion of host cGAS-STING innate immunity. Cleaves 2',3'-cGAMP which is produced by host cGAS following recognition of cytosolic DNA and blocks the subsequent 2',3'-cGAMP-mediated activation of TMEM173/STING, which normally spreads to adjacent cells and activates the interferon and NF-kappa-B immune responses. This chain is Poxin (OPG188), found in Homo sapiens (Human).